The primary structure comprises 208 residues: Octanoyltransferase (208 aa).

One can recognise a BPL/LPL catalytic domain in the interval 29–208; that stretch reads KTQDELVWLL…KEFNKVFCNC (180 aa). Residues 68–75, 140–142, and 153–155 contribute to the substrate site; these read RGGKYTYH, AFG, and GVS. The Acyl-thioester intermediate role is filled by C171.

The protein belongs to the LipB family.

The protein resides in the cytoplasm. The catalysed reaction is octanoyl-[ACP] + L-lysyl-[protein] = N(6)-octanoyl-L-lysyl-[protein] + holo-[ACP] + H(+). The protein operates within protein modification; protein lipoylation via endogenous pathway; protein N(6)-(lipoyl)lysine from octanoyl-[acyl-carrier-protein]: step 1/2. Its function is as follows. Catalyzes the transfer of endogenously produced octanoic acid from octanoyl-acyl-carrier-protein onto the lipoyl domains of lipoate-dependent enzymes. Lipoyl-ACP can also act as a substrate although octanoyl-ACP is likely to be the physiological substrate. The polypeptide is Octanoyltransferase (Ehrlichia ruminantium (strain Gardel)).